A 294-amino-acid chain; its full sequence is UPF0761 membrane protein YPTS_0028 (294 aa).

A run of 7 helical transmembrane segments spans residues 44-64 (LLSLVPLITVIFALFAAFPMF), 67-87 (ISIKLKAFIFANFIPATGDII), 108-128 (GLIVTALLLIYSVDSVLNIIW), 136-156 (LVFSFAVYWMVLTLGPILVGA), 185-205 (VFPLLISWVSFWLLYSVVPTV), 212-232 (ALIGALVAALLFELGKKGFAM), and 246-266 (VLAVIPILFLWVYWSWCIVLL).

Belongs to the UPF0761 family.

It is found in the cell inner membrane. This chain is UPF0761 membrane protein YPTS_0028, found in Yersinia pseudotuberculosis serotype IB (strain PB1/+).